The chain runs to 930 residues: Protein translocase subunit SecA (930 aa).

ATP-binding positions include Q83, 101 to 105 (GEGKT), and D491.

This sequence belongs to the SecA family. As to quaternary structure, monomer and homodimer. Part of the essential Sec protein translocation apparatus which comprises SecA, SecYEG and auxiliary proteins SecDF. Other proteins may also be involved.

It localises to the cell inner membrane. The protein localises to the cellular thylakoid membrane. The protein resides in the cytoplasm. It catalyses the reaction ATP + H2O + cellular proteinSide 1 = ADP + phosphate + cellular proteinSide 2.. Part of the Sec protein translocase complex. Interacts with the SecYEG preprotein conducting channel. Has a central role in coupling the hydrolysis of ATP to the transfer of proteins into and across the cell membrane, serving as an ATP-driven molecular motor driving the stepwise translocation of polypeptide chains across the membrane. Its function is as follows. Probably participates in protein translocation into and across both the cytoplasmic and thylakoid membranes in cyanobacterial cells. This is Protein translocase subunit SecA from Nostoc sp. (strain PCC 7120 / SAG 25.82 / UTEX 2576).